Reading from the N-terminus, the 1024-residue chain is PH and SEC7 domain-containing protein 1 (1024 aa).

The disordered stretch occupies residues 67–96 (CTPLRAPPSPHIAPSPWGPSSPTGQPPPGA). Over residues 71–95 (RAPPSPHIAPSPWGPSSPTGQPPPG) the composition is skewed to pro residues. Phosphoserine occurs at positions 126 and 156. Disordered stretches follow at residues 154–195 (STSD…LPNG), 250–277 (PSSG…VAVG), 307–401 (REEA…GPDS), and 434–536 (PTQS…LDST). Acidic residues predominate over residues 348 to 365 (NEDDEAGGEEDVDDEVFE). Over residues 445 to 463 (PPQPPAPRPDPPAPAPLAP) the composition is skewed to pro residues. Basic and acidic residues predominate over residues 495–507 (PRKELPSPSHSED). The 195-residue stretch at 512–706 (GAAPLGSEPP…KALYSSIKNE (195 aa)) folds into the SEC7 domain. Ser-720 carries the post-translational modification Phosphoserine. In terms of domain architecture, PH spans 756-869 (AVYKHGALVR…WITRINVVAA (114 aa)). Coiled-coil stretches lie at residues 898-924 (LSQE…HRAA) and 956-983 (AALL…AGST). The tract at residues 976–1024 (ALAQAGSTEDGCPPPHSSPSLRPKPTSQPRAQRPGSETRAGAGSTRPKP) is disordered.

The protein belongs to the PSD family. In terms of assembly, interacts with ACTN1. Interacts (ARF6-bound form) with KCNK1; does not interact with KCNK1 in the absence of ARF6. As to expression, highest expression detected in brain and some expression detected also in uterus, stomach, ovary and intestine, with isoform 2 being expressed at the highest levels. In the brain, isoform 1 is highly expressed in the strata oriens, radiatum, lacunosum-moleculare of the hippocampal CA1-3 regions and the dentate molecular layer of the hippocampal formation, with lower levels detected in the neuronal cell layers and the stratum lucidum (at protein level). Not detected in tongue, thymus, spleen, lung, heart, liver and kidney.

The protein localises to the cell membrane. It localises to the cell projection. The protein resides in the ruffle. Its subcellular location is the ruffle membrane. It is found in the cleavage furrow. Guanine nucleotide exchange factor for ARF6. Isoform 2 and isoform 3 induce cytoskeletal remodeling, but lead to distinct morphological changes in HeLa cells: isoform 2 induces cell elongation and formation of actin-rich protrusions, whereas isoform 3 promotes the formation of membrane ruffles and loss of stress fibers. This is PH and SEC7 domain-containing protein 1 (Psd) from Mus musculus (Mouse).